The chain runs to 493 residues: E3 ubiquitin-protein ligase Hakai (493 aa).

Disordered regions lie at residues M1 to L20 and I28 to E61. Residues D7–S16 show a composition bias toward polar residues. The RING-type zinc-finger motif lies at C109–N149. The tract at residues C148 to H206 is HYB domain. The segment at F164–H190 adopts a C2H2-type zinc-finger fold. The disordered stretch occupies residues Y253 to Q493. Pro residues-rich tracts occupy residues P262 to P276, A342 to S352, A372 to G389, and M399 to G412. Polar residues predominate over residues N427 to P444. Positions P459–Q469 are enriched in pro residues. Over residues G470–P480 the composition is skewed to low complexity.

This sequence belongs to the Hakai family. As to quaternary structure, homodimer. Interacts with tyrosine-phosphorylated SRC substrates. Component of the WMM complex, a N6-methyltransferase complex composed of a catalytic subcomplex, named MAC, and of an associated subcomplex, named MACOM. Component of the MACOM subcomplex.

It is found in the nucleus speckle. The protein resides in the nucleus. The protein localises to the nucleoplasm. It carries out the reaction S-ubiquitinyl-[E2 ubiquitin-conjugating enzyme]-L-cysteine + [acceptor protein]-L-lysine = [E2 ubiquitin-conjugating enzyme]-L-cysteine + N(6)-ubiquitinyl-[acceptor protein]-L-lysine.. The protein operates within protein modification; protein ubiquitination. Functionally, E3 ubiquitin-protein ligase that mediates ubiquitination of several tyrosine-phosphorylated Src substrates. Associated component of the WMM complex, a complex that mediates N6-methyladenosine (m6A) methylation of RNAs, a modification that plays a role in the efficiency of mRNA splicing and RNA processing. The protein is E3 ubiquitin-protein ligase Hakai of Gallus gallus (Chicken).